Here is a 136-residue protein sequence, read N- to C-terminus: Salivary protein 15 Iric-2 (136 aa).

Residues 1–22 (MESFVAMKVVCIVLLFVIAAEA) form the signal peptide. N-linked (GlcNAc...) asparagine glycosylation occurs at asparagine 105. The tract at residues 117-136 (GPKNQTCENKDQCVPHIPGC) is CD4-binding.

It belongs to the salp15 family. As to quaternary structure, interacts with host CD4. Interacts with host DC-SIGN (CD209). Interacts with Borrelia outer surface protein C (OspC). As to expression, expressed in salivary glands. Detected in fed adult female.

It is found in the secreted. Functionally, salivary tick protein that downregulates host immune system by binding to both dendritic cells, and CD4(+) T cells. Specifically binds to the CD4 coreceptor on T cells. This interaction prevents the activation of the Src kinase, Lck, and its downstream substrate Zap-70, and results in deficient activation of PLCgamma1, the repression of calcium fluxes triggered by T-cell antigen receptor (TCR) ligation, and a subsequent reduction in interleukin-2 production. This salivary protein also binds to DC-SIGN (CD209) on dendritic cells (DC) and activates the Raf-1 kinase/MEK signaling pathway that results in down-regulating expression of pro-inflammatory cytokines. Furthermore, it inhibits T cell proliferation induced by DCs. In addition, it inhibits in vitro keratinocyte inflammation induced by Borrelia burgdorferi or by the major outer surface protein (OspC) of Borrelia. In addition, it downregulates chemokines and monocyte chemoattractant protein 1, as well as several antimicrobial peptides such as defensins, cathelicidin, psoriasin, and RNase 7. Apart from its immunomodulatory activities, it is also associated with protection of Borrelia spirochetes from antibody-mediated killing through its binding to OspC. In vivo, tests on different immune disease animal models show promising therapeutic results, e.g., in inhibiting HIV infection, experimental autoimmune encephalomyelitis, transplantation rejection, and asthma. The protein is Salivary protein 15 Iric-2 of Ixodes ricinus (Common tick).